A 278-amino-acid polypeptide reads, in one-letter code: Large ribosomal subunit protein uL2 (278 aa).

2 disordered regions span residues 1 to 58 (MAIR…GGGH) and 225 to 278 (VMNP…KNKR). Residues 37–58 (LHGRGGRNAHGRITTRHKGGGH) are compositionally biased toward basic residues. Over residues 253–267 (PEGRTRKNKASDKMI) the composition is skewed to basic and acidic residues. The span at 268-278 (VRRRRTGKNKR) shows a compositional bias: basic residues.

It belongs to the universal ribosomal protein uL2 family. In terms of assembly, part of the 50S ribosomal subunit. Forms a bridge to the 30S subunit in the 70S ribosome.

Its function is as follows. One of the primary rRNA binding proteins. Required for association of the 30S and 50S subunits to form the 70S ribosome, for tRNA binding and peptide bond formation. It has been suggested to have peptidyltransferase activity; this is somewhat controversial. Makes several contacts with the 16S rRNA in the 70S ribosome. The chain is Large ribosomal subunit protein uL2 from Rhodococcus erythropolis (strain PR4 / NBRC 100887).